Consider the following 153-residue polypeptide: Large ribosomal subunit protein uL15 (153 aa).

Residues 21-41 (RGIGSGKGKTGGRGIKGQKSR) form a disordered region. Over residues 23–35 (IGSGKGKTGGRGI) the composition is skewed to gly residues.

The protein belongs to the universal ribosomal protein uL15 family. Part of the 50S ribosomal subunit.

Binds to the 23S rRNA. The chain is Large ribosomal subunit protein uL15 from Rickettsia massiliae (strain Mtu5).